The primary structure comprises 314 residues: Methionyl-tRNA formyltransferase (314 aa).

113–116 (SLLP) is a (6S)-5,6,7,8-tetrahydrofolate binding site.

This sequence belongs to the Fmt family.

The enzyme catalyses L-methionyl-tRNA(fMet) + (6R)-10-formyltetrahydrofolate = N-formyl-L-methionyl-tRNA(fMet) + (6S)-5,6,7,8-tetrahydrofolate + H(+). Attaches a formyl group to the free amino group of methionyl-tRNA(fMet). The formyl group appears to play a dual role in the initiator identity of N-formylmethionyl-tRNA by promoting its recognition by IF2 and preventing the misappropriation of this tRNA by the elongation apparatus. This Ectopseudomonas mendocina (strain ymp) (Pseudomonas mendocina) protein is Methionyl-tRNA formyltransferase.